A 701-amino-acid chain; its full sequence is Eukaryotic peptide chain release factor GTP-binding subunit (701 aa).

Residues 1–25 show a composition bias toward polar residues; it reads MSDDQQYNQDKLSQDFQNTSIGSGE. Disordered stretches follow at residues 1–63, 91–124, and 164–259; these read MSDD…YQGG, NQGY…NQQD, and KLAN…VIQE. Positions 20–131 are several sort of repeats; sequence SIGSGEQQQQ…QQDQQPVQNQ (112 aa). Low complexity predominate over residues 26 to 40; it reads QQQQSYQQYQQQPQQ. Positions 41-54 are enriched in polar residues; sequence NNFNANSAPTFTPS. Residues 132-271 form a charged region; it reads GMSLADFQKQ…DEVDEEVVKD (140 aa). Positions 170–224 are enriched in basic and acidic residues; the sequence is KAPETESKEATPAATEKEATPAATEKEATPAATEKEATPAATEKETTPAPAKKEA. Residues 228 to 252 show a composition bias toward polar residues; that stretch reads SVKSESKPASKSTSKVATKESTPVT. One can recognise a tr-type G domain in the interval 276–501; that stretch reads KDHVSIIFMG…FLDNMKTMQR (226 aa). The tract at residues 285–292 is G1; that stretch reads GHVDAGKS. 285–292 serves as a coordination point for GTP; it reads GHVDAGKS. Residues 341-345 are G2; it reads GKTIE. Position 359 is a phosphothreonine (Thr359). Residues 362 to 365 form a G3 region; sequence DAPG. Residues 362–366 and 424–427 each bind GTP; these read DAPGH and NKMD. The interval 424–427 is G4; the sequence is NKMD. The G5 stretch occupies residues 465–467; the sequence is SGY.

The protein belongs to the TRAFAC class translation factor GTPase superfamily. Classic translation factor GTPase family. ERF3 subfamily.

The protein localises to the cytoplasm. Functionally, involved in translation termination. Stimulates the activity of ERF1. Binds guanine nucleotides. The chain is Eukaryotic peptide chain release factor GTP-binding subunit (SUP35) from Debaryomyces hansenii (strain ATCC 36239 / CBS 767 / BCRC 21394 / JCM 1990 / NBRC 0083 / IGC 2968) (Yeast).